Reading from the N-terminus, the 360-residue chain is S-adenosylmethionine decarboxylase proenzyme (360 aa).

Residues Glu-13 and Glu-16 contribute to the active site. The active-site Schiff-base intermediate with substrate; via pyruvic acid is the Ser-73. Pyruvic acid (Ser); by autocatalysis is present on Ser-73. The Proton donor; for catalytic activity role is filled by Cys-87. Active-site proton acceptor; for processing activity residues include Ser-236 and His-249.

It belongs to the eukaryotic AdoMetDC family. Pyruvate is required as a cofactor. In terms of processing, is synthesized initially as an inactive proenzyme. Formation of the active enzyme involves a self-maturation process in which the active site pyruvoyl group is generated from an internal serine residue via an autocatalytic post-translational modification. Two non-identical subunits are generated from the proenzyme in this reaction, and the pyruvate is formed at the N-terminus of the alpha chain, which is derived from the carboxyl end of the proenzyme. The post-translation cleavage follows an unusual pathway, termed non-hydrolytic serinolysis, in which the side chain hydroxyl group of the serine supplies its oxygen atom to form the C-terminus of the beta chain, while the remainder of the serine residue undergoes an oxidative deamination to produce ammonia and the pyruvoyl group blocking the N-terminus of the alpha chain. In terms of tissue distribution, stolon, also expressed in leaves, stems and roots.

It catalyses the reaction S-adenosyl-L-methionine + H(+) = S-adenosyl 3-(methylsulfanyl)propylamine + CO2. It participates in amine and polyamine biosynthesis; S-adenosylmethioninamine biosynthesis; S-adenosylmethioninamine from S-adenosyl-L-methionine: step 1/1. The polypeptide is S-adenosylmethionine decarboxylase proenzyme (SAMDC) (Solanum tuberosum (Potato)).